The primary structure comprises 513 residues: Maturase K (513 aa).

The protein belongs to the intron maturase 2 family. MatK subfamily.

Its subcellular location is the plastid. The protein resides in the chloroplast. Usually encoded in the trnK tRNA gene intron. Probably assists in splicing its own and other chloroplast group II introns. This is Maturase K from Typha angustifolia (Narrow leaf cattail).